We begin with the raw amino-acid sequence, 164 residues long: 3-isopropylmalate dehydratase small subunit 2 (164 aa).

It belongs to the LeuD family. LeuD type 2 subfamily. Heterodimer of LeuC and LeuD.

The enzyme catalyses (2R,3S)-3-isopropylmalate = (2S)-2-isopropylmalate. It participates in amino-acid biosynthesis; L-leucine biosynthesis; L-leucine from 3-methyl-2-oxobutanoate: step 2/4. Functionally, catalyzes the isomerization between 2-isopropylmalate and 3-isopropylmalate, via the formation of 2-isopropylmaleate. This is 3-isopropylmalate dehydratase small subunit 2 (leuD2) from Pyrococcus furiosus (strain ATCC 43587 / DSM 3638 / JCM 8422 / Vc1).